A 549-amino-acid chain; its full sequence is MTARPNPVTATVRSDIPMSDTVVSTTYSEQAAHLVARIDQDGLGSVRPSLYETARVISAAPWLPGEPRRLAYLLDEQAPDGSWGEGPERYRLLPTLSGVEAALAVLRRGATPTETARRLAGAVDRGLAALRALPRSGPWPDTAAAEILVPGLVAKIHEQIARIAEDGTPALDGWRPGPGPALPGGYDEALPAYVAKRYASVGSLPVKFHHTFEGIAGYLPPALIPDVPDLLGSSPAATAARAATASSAPSAGTVAALESVAERYAGSFPEAAPILVFERLWVAAALAHTHLPAAALPTVRRWAADIYDPRGVRGAPGLMKDADDTAMAVLVSSLVGLEHTLEPLDQFHNGSHYDCYIGEDTGSITANAHALQALGGYQRRNPETQHIYGPRTDKLRDWLIDQQRPEGPWPDKWHASPYYATARSVAALTRFGGGHAVTAVETAVTWALDTQRDDGSWGVWGGTAEETAYAVQILLSTSTHRPQHTRALHRAETYLGDSAGSGRHPALWHDKTLYAPDAMIEAEILAARQTLRTRHDLNRRVTTPIHAEK.

Positions 321 to 326 (DADDTA) match the DXDDTA motif motif. A QXXDGSW motif motif is present at residues 451–457 (QRDDGSW).

This sequence belongs to the terpene synthase family. The cofactor is Mg(2+).

The enzyme catalyses (2E,6E,10E)-geranylgeranyl diphosphate = (+)-copalyl diphosphate. Its function is as follows. Involved in the biosynthesis of the labdane-type bicyclic diterpene labda-8(17),12(E),14-triene. Catalyzes the conversion of geranylgeranyl diphosphate (GGDP) into (+)-copalyl diphosphate. The polypeptide is Copalyl diphosphate synthase (Streptomyces anulatus (Streptomyces chrysomallus)).